The chain runs to 217 residues: Mediator of RNA polymerase II transcription subunit 18 (217 aa).

Belongs to the Mediator complex subunit 18 family. As to quaternary structure, component of the Mediator complex, which includes at least CDK8, MED4, MED6, MED11, MED14, MED17, MED18, MED20, MED21, MED22, MED27, MED28, MED30 and MED31.

The protein localises to the nucleus. Its function is as follows. Component of the Mediator complex, a coactivator involved in the regulated transcription of nearly all RNA polymerase II-dependent genes. Mediator functions as a bridge to convey information from gene-specific regulatory proteins to the basal RNA polymerase II transcription machinery. Mediator is recruited to promoters by direct interactions with regulatory proteins and serves as a scaffold for the assembly of a functional preinitiation complex with RNA polymerase II and the general transcription factors. The chain is Mediator of RNA polymerase II transcription subunit 18 (MED18) from Drosophila melanogaster (Fruit fly).